The sequence spans 596 residues: Elongation factor 4 (596 aa).

One can recognise a tr-type G domain in the interval 2–184 (KQIRNFSIIA…VIVAKIPPPE (183 aa)). GTP is bound by residues 14 to 19 (DHGKST) and 131 to 134 (NKID).

It belongs to the TRAFAC class translation factor GTPase superfamily. Classic translation factor GTPase family. LepA subfamily.

It is found in the cell inner membrane. It catalyses the reaction GTP + H2O = GDP + phosphate + H(+). Functionally, required for accurate and efficient protein synthesis under certain stress conditions. May act as a fidelity factor of the translation reaction, by catalyzing a one-codon backward translocation of tRNAs on improperly translocated ribosomes. Back-translocation proceeds from a post-translocation (POST) complex to a pre-translocation (PRE) complex, thus giving elongation factor G a second chance to translocate the tRNAs correctly. Binds to ribosomes in a GTP-dependent manner. The polypeptide is Elongation factor 4 (Shewanella baltica (strain OS223)).